Consider the following 434-residue polypeptide: UDP-N-acetylglucosamine 1-carboxyvinyltransferase 1 (434 aa).

22–23 (KN) contributes to the phosphoenolpyruvate binding site. Residue Arg93 coordinates UDP-N-acetyl-alpha-D-glucosamine. The active-site Proton donor is Cys117. Cys117 is modified (2-(S-cysteinyl)pyruvic acid O-phosphothioketal). UDP-N-acetyl-alpha-D-glucosamine is bound by residues 122–126 (RPIDQ), Asp306, and Val328.

Belongs to the EPSP synthase family. MurA subfamily.

It is found in the cytoplasm. It carries out the reaction phosphoenolpyruvate + UDP-N-acetyl-alpha-D-glucosamine = UDP-N-acetyl-3-O-(1-carboxyvinyl)-alpha-D-glucosamine + phosphate. It functions in the pathway cell wall biogenesis; peptidoglycan biosynthesis. In terms of biological role, cell wall formation. Adds enolpyruvyl to UDP-N-acetylglucosamine. In Bacillus cereus (strain ATCC 10987 / NRS 248), this protein is UDP-N-acetylglucosamine 1-carboxyvinyltransferase 1.